Reading from the N-terminus, the 346-residue chain is Phosphoribosylformylglycinamidine cyclo-ligase (346 aa).

This sequence belongs to the AIR synthase family.

It is found in the cytoplasm. It catalyses the reaction 2-formamido-N(1)-(5-O-phospho-beta-D-ribosyl)acetamidine + ATP = 5-amino-1-(5-phospho-beta-D-ribosyl)imidazole + ADP + phosphate + H(+). It participates in purine metabolism; IMP biosynthesis via de novo pathway; 5-amino-1-(5-phospho-D-ribosyl)imidazole from N(2)-formyl-N(1)-(5-phospho-D-ribosyl)glycinamide: step 2/2. The sequence is that of Phosphoribosylformylglycinamidine cyclo-ligase from Bacillus velezensis (strain DSM 23117 / BGSC 10A6 / LMG 26770 / FZB42) (Bacillus amyloliquefaciens subsp. plantarum).